The chain runs to 517 residues: Crotonobetaine/carnitine--CoA ligase (517 aa).

The protein belongs to the ATP-dependent AMP-binding enzyme family.

The enzyme catalyses 4-(trimethylamino)butanoate + ATP + CoA = 4-(trimethylamino)butanoyl-CoA + AMP + diphosphate. It catalyses the reaction crotonobetaine + ATP + CoA = crotonobetainyl-CoA + AMP + diphosphate. The catalysed reaction is (R)-carnitine + ATP + CoA = (R)-carnitinyl-CoA + AMP + diphosphate. Its pathway is amine and polyamine metabolism; carnitine metabolism. Functionally, catalyzes the transfer of CoA to carnitine, generating the initial carnitinyl-CoA needed for the CaiB reaction cycle. Also has activity toward crotonobetaine and gamma-butyrobetaine. This chain is Crotonobetaine/carnitine--CoA ligase, found in Shigella dysenteriae serotype 1 (strain Sd197).